Reading from the N-terminus, the 297-residue chain is Acetaldehyde dehydrogenase (297 aa).

Residue C128 is the Acyl-thioester intermediate of the active site. NAD(+) contacts are provided by residues 159–167 (SAGPGTRQN) and N272.

The protein belongs to the acetaldehyde dehydrogenase family.

The enzyme catalyses acetaldehyde + NAD(+) + CoA = acetyl-CoA + NADH + H(+). The sequence is that of Acetaldehyde dehydrogenase from Desulfitobacterium hafniense (strain DSM 10664 / DCB-2).